The chain runs to 134 residues: Large ribosomal subunit protein bL12 (134 aa).

The protein belongs to the bacterial ribosomal protein bL12 family. Homodimer. Part of the ribosomal stalk of the 50S ribosomal subunit. Forms a multimeric L10(L12)X complex, where L10 forms an elongated spine to which 2 to 4 L12 dimers bind in a sequential fashion. Binds GTP-bound translation factors.

Forms part of the ribosomal stalk which helps the ribosome interact with GTP-bound translation factors. Is thus essential for accurate translation. This is Large ribosomal subunit protein bL12 from Chlamydia abortus (strain DSM 27085 / S26/3) (Chlamydophila abortus).